The following is a 304-amino-acid chain: Protein ML (304 aa).

Its function is as follows. Blocks host IRF3 and IRF7, thereby inhibiting IFN-beta expression and activation of host antiviral state. The protein is Protein ML of Thogoto virus (isolate SiAr 126) (Tho).